The chain runs to 107 residues: Essential MCU regulator, mitochondrial (107 aa).

The N-terminal 52 residues, 1–52 (MASGAARWLVLAPVRSGALRSGPSLRKDGDVSAAWSGSGRSLVPSRSVIVTR), are a transit peptide targeting the mitochondrion. Positions 1 to 52 (MASGAARWLVLAPVRSGALRSGPSLRKDGDVSAAWSGSGRSLVPSRSVIVTR) are interaction with MAIP1. The Mitochondrial matrix segment spans residues 54–65 (GAILPKPVKMSF). Residues 66 to 85 (GLLRVFSIVIPFLYVGTLIS) form a helical membrane-spanning segment. The GXXXX[G/A/S] motif lies at 81–85 (GTLIS). Residues 86-107 (KNFAALLEEHDIFVPEDDDDDD) are Mitochondrial intermembrane-facing.

The protein belongs to the SMDT1/EMRE family. In terms of assembly, component of the uniplex complex, composed of MCU, EMRE/SMDT1, MICU1 and MICU2 (or MICU3) in a 4:4:1:1 stoichiometry. The number of EMRE/SMDT1 molecules is hovewer variable, ranging from 1 to 4 copies per uniplex complex, leading to uniplex complexes with distinct gatekeeping profiles. Interacts (via its C-terminal poly-Asp tail) with MCUR1; the interaction is direct. Unprocessed form interacts (via transit peptide) with MAIP1. Post-translationally, undergoes proteolytic degradation in neurons: degraded by AFG3L2 and SPG7 before SMDT1/EMRE assembly with the uniporter complex, limiting the availability of SMDT1/EMRE for MCU assembly and promoting efficient assembly of gatekeeper subunits with MCU.

The protein resides in the mitochondrion inner membrane. Functionally, essential regulatory subunit of the mitochondrial calcium uniporter complex (uniplex), a complex that mediates calcium uptake into mitochondria. Required to bridge the calcium-sensing proteins MICU1 with the calcium-conducting subunit MCU. Acts by mediating activation of MCU and retention of MICU1 to the MCU pore, in order to ensure tight regulation of the uniplex complex and appropriate responses to intracellular calcium signaling. The chain is Essential MCU regulator, mitochondrial from Homo sapiens (Human).